A 334-amino-acid polypeptide reads, in one-letter code: Protein-methionine-sulfoxide reductase catalytic subunit MsrP (334 aa).

The segment at residues 1 to 44 (MKKIRPLTEADVTAESAFFMQRRQVLKALGISAAALSLPSTAQA) is a signal peptide (tat-type signal). Residues asparagine 88, 91–92 (YE), cysteine 146, threonine 181, asparagine 233, arginine 238, and 249–251 (GIK) contribute to the Mo-molybdopterin site.

This sequence belongs to the MsrP family. As to quaternary structure, heterodimer of a catalytic subunit (MsrP) and a heme-binding subunit (MsrQ). The cofactor is Mo-molybdopterin. Post-translationally, predicted to be exported by the Tat system. The position of the signal peptide cleavage has not been experimentally proven.

It localises to the periplasm. It carries out the reaction L-methionyl-[protein] + a quinone + H2O = L-methionyl-(S)-S-oxide-[protein] + a quinol. It catalyses the reaction L-methionyl-[protein] + a quinone + H2O = L-methionyl-(R)-S-oxide-[protein] + a quinol. Part of the MsrPQ system that repairs oxidized periplasmic proteins containing methionine sulfoxide residues (Met-O), using respiratory chain electrons. Thus protects these proteins from oxidative-stress damage caused by reactive species of oxygen and chlorine generated by the host defense mechanisms. MsrPQ is essential for the maintenance of envelope integrity under bleach stress, rescuing a wide series of structurally unrelated periplasmic proteins from methionine oxidation, including the primary periplasmic chaperone SurA and the lipoprotein Pal. The catalytic subunit MsrP is non-stereospecific, being able to reduce both (R-) and (S-) diastereoisomers of methionine sulfoxide. The sequence is that of Protein-methionine-sulfoxide reductase catalytic subunit MsrP from Salmonella agona (strain SL483).